Reading from the N-terminus, the 258-residue chain is Ubiquinone/menaquinone biosynthesis C-methyltransferase UbiE (258 aa).

S-adenosyl-L-methionine is bound by residues T83, D104, and 130–131 (DA).

It belongs to the class I-like SAM-binding methyltransferase superfamily. MenG/UbiE family.

It catalyses the reaction a 2-demethylmenaquinol + S-adenosyl-L-methionine = a menaquinol + S-adenosyl-L-homocysteine + H(+). It carries out the reaction a 2-methoxy-6-(all-trans-polyprenyl)benzene-1,4-diol + S-adenosyl-L-methionine = a 5-methoxy-2-methyl-3-(all-trans-polyprenyl)benzene-1,4-diol + S-adenosyl-L-homocysteine + H(+). It functions in the pathway quinol/quinone metabolism; menaquinone biosynthesis; menaquinol from 1,4-dihydroxy-2-naphthoate: step 2/2. The protein operates within cofactor biosynthesis; ubiquinone biosynthesis. In terms of biological role, methyltransferase required for the conversion of demethylmenaquinol (DMKH2) to menaquinol (MKH2) and the conversion of 2-polyprenyl-6-methoxy-1,4-benzoquinol (DDMQH2) to 2-polyprenyl-3-methyl-6-methoxy-1,4-benzoquinol (DMQH2). The polypeptide is Ubiquinone/menaquinone biosynthesis C-methyltransferase UbiE (Bordetella bronchiseptica (strain ATCC BAA-588 / NCTC 13252 / RB50) (Alcaligenes bronchisepticus)).